A 78-amino-acid polypeptide reads, in one-letter code: Acyl carrier protein (78 aa).

Positions 2-77 constitute a Carrier domain; sequence SNIEDRVRKI…AAIDYVNSAS (76 aa). Ser37 is modified (O-(pantetheine 4'-phosphoryl)serine).

The protein belongs to the acyl carrier protein (ACP) family. 4'-phosphopantetheine is transferred from CoA to a specific serine of apo-ACP by AcpS. This modification is essential for activity because fatty acids are bound in thioester linkage to the sulfhydryl of the prosthetic group.

It localises to the cytoplasm. Its pathway is lipid metabolism; fatty acid biosynthesis. In terms of biological role, carrier of the growing fatty acid chain in fatty acid biosynthesis. In Photobacterium profundum (strain SS9), this protein is Acyl carrier protein.